A 277-amino-acid polypeptide reads, in one-letter code: Diaminopimelate epimerase (277 aa).

N17, Q50, and N68 together coordinate substrate. The active-site Proton donor is C77. Residues 78 to 79 (GN), N162, N195, and 213 to 214 (ER) contribute to the substrate site. C222 functions as the Proton acceptor in the catalytic mechanism. Residue 223-224 (GT) coordinates substrate.

This sequence belongs to the diaminopimelate epimerase family. In terms of assembly, homodimer.

The protein resides in the cytoplasm. It catalyses the reaction (2S,6S)-2,6-diaminopimelate = meso-2,6-diaminopimelate. It functions in the pathway amino-acid biosynthesis; L-lysine biosynthesis via DAP pathway; DL-2,6-diaminopimelate from LL-2,6-diaminopimelate: step 1/1. Catalyzes the stereoinversion of LL-2,6-diaminopimelate (L,L-DAP) to meso-diaminopimelate (meso-DAP), a precursor of L-lysine and an essential component of the bacterial peptidoglycan. In Phenylobacterium zucineum (strain HLK1), this protein is Diaminopimelate epimerase.